Consider the following 420-residue polypeptide: UDP-N-acetylglucosamine 1-carboxyvinyltransferase (420 aa).

Phosphoenolpyruvate is bound at residue 22-23 (KN). Arg-91 is a binding site for UDP-N-acetyl-alpha-D-glucosamine. The Proton donor role is filled by Cys-115. Cys-115 is subject to 2-(S-cysteinyl)pyruvic acid O-phosphothioketal. UDP-N-acetyl-alpha-D-glucosamine is bound by residues 120 to 124 (RPVDL), 160 to 163 (KVSV), Asp-305, and Ile-327.

Belongs to the EPSP synthase family. MurA subfamily.

It localises to the cytoplasm. It carries out the reaction phosphoenolpyruvate + UDP-N-acetyl-alpha-D-glucosamine = UDP-N-acetyl-3-O-(1-carboxyvinyl)-alpha-D-glucosamine + phosphate. Its pathway is cell wall biogenesis; peptidoglycan biosynthesis. Cell wall formation. Adds enolpyruvyl to UDP-N-acetylglucosamine. In Pectobacterium carotovorum subsp. carotovorum (strain PC1), this protein is UDP-N-acetylglucosamine 1-carboxyvinyltransferase.